The chain runs to 636 residues: 1-deoxy-D-xylulose-5-phosphate synthase 2 (636 aa).

Residues histidine 78 and 119–121 each bind thiamine diphosphate; that span reads AHS. Aspartate 150 is a Mg(2+) binding site. Residues 151-152, asparagine 179, tyrosine 288, and glutamate 370 each bind thiamine diphosphate; that span reads GS. Asparagine 179 lines the Mg(2+) pocket.

The protein belongs to the transketolase family. DXPS subfamily. In terms of assembly, homodimer. Mg(2+) is required as a cofactor. Requires thiamine diphosphate as cofactor.

It catalyses the reaction D-glyceraldehyde 3-phosphate + pyruvate + H(+) = 1-deoxy-D-xylulose 5-phosphate + CO2. It participates in metabolic intermediate biosynthesis; 1-deoxy-D-xylulose 5-phosphate biosynthesis; 1-deoxy-D-xylulose 5-phosphate from D-glyceraldehyde 3-phosphate and pyruvate: step 1/1. Its function is as follows. Catalyzes the acyloin condensation reaction between C atoms 2 and 3 of pyruvate and glyceraldehyde 3-phosphate to yield 1-deoxy-D-xylulose-5-phosphate (DXP). This Jannaschia sp. (strain CCS1) protein is 1-deoxy-D-xylulose-5-phosphate synthase 2.